Here is a 116-residue protein sequence, read N- to C-terminus: Protein TRACHEARY ELEMENT DIFFERENTIATION-RELATED 6 (116 aa).

Topologically, residues 1-24 (MASTDSVYRPTPTPDHDTTVVVVV) are extracellular. Residues 25–45 (FVSLGCVMFLAFLAFVIWFLI) traverse the membrane as a helical segment. The Cytoplasmic portion of the chain corresponds to 46–116 (KKRSRKHRER…GVGSSVVSRS (71 aa)).

As to quaternary structure, interacts with CESA7/IRX3, a subunit of the secondary cell wall (SCW)-related cellulose synthase complex. In terms of tissue distribution, expressed preferentially in differentiating vessel elements in seedlings.

Its subcellular location is the cell membrane. The protein resides in the secreted. It is found in the cell wall. Functionally, involved in the secondary cell wall (SCW) formation of vessel elements (e.g. protoxylem and metaxylem), thus promoting tracheary element (TE) differentiation. The protein is Protein TRACHEARY ELEMENT DIFFERENTIATION-RELATED 6 of Arabidopsis thaliana (Mouse-ear cress).